A 556-amino-acid polypeptide reads, in one-letter code: Phosphoenolpyruvate-protein phosphotransferase (556 aa).

Catalysis depends on H186, which acts as the Tele-phosphohistidine intermediate. Phosphoenolpyruvate contacts are provided by R288 and R325. Mg(2+)-binding residues include E415 and D439. Phosphoenolpyruvate contacts are provided by residues 438-439 (ND) and R449. The active-site Proton donor is C486.

Belongs to the PEP-utilizing enzyme family. Homodimer. The cofactor is Mg(2+).

It is found in the cytoplasm. It carries out the reaction L-histidyl-[protein] + phosphoenolpyruvate = N(pros)-phospho-L-histidyl-[protein] + pyruvate. Its function is as follows. General (non sugar-specific) component of the phosphoenolpyruvate-dependent sugar phosphotransferase system (sugar PTS). This major carbohydrate active-transport system catalyzes the phosphorylation of incoming sugar substrates concomitantly with their translocation across the cell membrane. Enzyme I transfers the phosphoryl group from phosphoenolpyruvate (PEP) to the phosphoryl carrier protein (HPr). The polypeptide is Phosphoenolpyruvate-protein phosphotransferase (ptsI) (Streptomyces coelicolor (strain ATCC BAA-471 / A3(2) / M145)).